We begin with the raw amino-acid sequence, 342 residues long: MNPQKIAVLGPGSWGTGLSQVLNDNGHEVRIWGNNLEQMAEINEKHTNTRYFKDVVLDEKIKAYSRLDLALENVDAILFVVPTKVTRLVAKQVAQVLKHKVHILHASKGLEQGTHDRISTILEEEIPAQLRGEIVVVSGPSHAEETIVRDITLISAASNDHDEAKYAQSIFSNDYFRLYTNTDVIGVETAGALKNIIAVGAGALHGLGFGDNAKAAIITRGLAEITRLGVAMGAEPLTYSGLSGVGDLIVTGTSIHSRNWRAGDALGRGEKIADIEKNMGMVIEGVSTTKAAYELAQRLEIDMPITETIYKVLYENLDAKSGILDIMRRETRAENEFININK.

NADPH contacts are provided by S13, W14, and K108. Residues K108, G139, and S141 each contribute to the sn-glycerol 3-phosphate site. A143 contributes to the NADPH binding site. 5 residues coordinate sn-glycerol 3-phosphate: K194, D247, S257, R258, and N259. The active-site Proton acceptor is the K194. R258 serves as a coordination point for NADPH. NADPH contacts are provided by V282 and E284.

This sequence belongs to the NAD-dependent glycerol-3-phosphate dehydrogenase family.

The protein resides in the cytoplasm. The catalysed reaction is sn-glycerol 3-phosphate + NAD(+) = dihydroxyacetone phosphate + NADH + H(+). It catalyses the reaction sn-glycerol 3-phosphate + NADP(+) = dihydroxyacetone phosphate + NADPH + H(+). It functions in the pathway membrane lipid metabolism; glycerophospholipid metabolism. Its function is as follows. Catalyzes the reduction of the glycolytic intermediate dihydroxyacetone phosphate (DHAP) to sn-glycerol 3-phosphate (G3P), the key precursor for phospholipid synthesis. This chain is Glycerol-3-phosphate dehydrogenase [NAD(P)+], found in Lactococcus lactis subsp. cremoris (strain SK11).